Consider the following 179-residue polypeptide: MLLEAIKYFKVSLSIDPIEECSFILREIFNIPKNKKEVEKYLSLKKDLYISLEEFLFKLNLIPLAAFEYLKAASIASPQEEQKLLLKVHKVYSTEMEENTVFIRSMLDKGKMEDLSIVTKEADRTKFLSDTQTIINDFVSLPELQAKEWPEVQQNQNEQLTNNQQEVNKCQLIQDIGIG.

This is an uncharacterized protein from Rickettsia conorii (strain ATCC VR-613 / Malish 7).